We begin with the raw amino-acid sequence, 290 residues long: Porphobilinogen deaminase (290 aa).

Residue Cys-237 is modified to S-(dipyrrolylmethanemethyl)cysteine.

Belongs to the HMBS family. In terms of assembly, monomer. Dipyrromethane is required as a cofactor.

It carries out the reaction 4 porphobilinogen + H2O = hydroxymethylbilane + 4 NH4(+). Its pathway is porphyrin-containing compound metabolism; protoporphyrin-IX biosynthesis; coproporphyrinogen-III from 5-aminolevulinate: step 2/4. Functionally, tetrapolymerization of the monopyrrole PBG into the hydroxymethylbilane pre-uroporphyrinogen in several discrete steps. The chain is Porphobilinogen deaminase from Clostridium botulinum (strain 657 / Type Ba4).